A 606-amino-acid polypeptide reads, in one-letter code: Cryptochrome-1 (606 aa).

Residues 3–132 enclose the Photolyase/cryptochrome alpha/beta domain; that stretch reads VNAVHWFRKG…EVIVRISHTL (130 aa). Lys11 is covalently cross-linked (Glycyl lysine isopeptide (Lys-Gly) (interchain with G-Cter in ubiquitin)). The short motif at 50-54 is the LIR 1 element; it reads NRWRF. Ser71 carries the phosphoserine; by AMPK modification. Positions 82-87 match the LIR 2 motif; it reads DVFPRL. A Glycyl lysine isopeptide (Lys-Gly) (interchain with G-Cter in ubiquitin) cross-link involves residue Lys107. The LIR 3 signature appears at 151–156; the sequence is KRFQTL. A Glycyl lysine isopeptide (Lys-Gly) (interchain with G-Cter in ubiquitin) cross-link involves residue Lys159. Ser247 bears the Phosphoserine; by MAPK mark. Ser252 serves as a coordination point for FAD. 2 short sequence motifs (LIR) span residues 255 to 260 and 271 to 276; these read LRFGCL and DLYKKV. Ser280 is modified (phosphoserine; by AMPK). Positions 285 to 290 match the LIR 6 motif; sequence SLYGQL. An FAD-binding site is contributed by Gln289. Lys329 participates in a covalent cross-link: Glycyl lysine isopeptide (Lys-Gly) (interchain with G-Cter in ubiquitin). An LIR 7 motif is present at residues 335–339; that stretch reads TGFPW. FAD is bound at residue His355. The required for inhibition of CLOCK-BMAL1-mediated transcription stretch occupies residues 371–470; it reads WISWEEGMKV…LIGVNYPKPM (100 aa). An LIR 8 motif is present at residues 379 to 384; the sequence is KVFEEL. 387–389 contacts FAD; the sequence is DAD. Short sequence motifs (LIR) lie at residues 395–400, 411–416, and 430–435; these read GSWMWL, HCYCPV, and RRYLPV. The interval 471-493 is interaction with TIMELESS; sequence VNHAEASRLNIERMKQIYQQLSR. A Glycyl lysine isopeptide (Lys-Gly) (interchain with G-Cter in ubiquitin) cross-link involves residue Lys485. Short sequence motifs (LIR) lie at residues 486-491 and 492-497; these read QIYQQL and SRYRGL. The segment at 559–606 is disordered; that stretch reads YAHGDSQQTHSLKQGRSSAGTGLSSGKRPSQEEDAQSVGPKVQRQSSN. Positions 563–586 are enriched in polar residues; the sequence is DSQQTHSLKQGRSSAGTGLSSGKR. A Glycyl lysine isopeptide (Lys-Gly) (interchain with G-Cter in ubiquitin) cross-link involves residue Lys585. Phosphoserine is present on Ser588.

Belongs to the DNA photolyase class-1 family. As to quaternary structure, component of the circadian core oscillator, which includes the CRY proteins, CLOCK or NPAS2, BMAL1 or BMAL2, CSNK1D and/or CSNK1E, TIMELESS, and the PER proteins. Interacts directly with TIMELESS. Interacts directly with PER1 and PER2; interaction with PER2 inhibits its ubiquitination and vice versa. Interacts with PER3. Interacts with FBXL21. Interacts with FBXL3. Interacts with PPP5C (via TPR repeats). Interacts with CLOCK-BMAL1 independently of PER2 and DNA. Interacts with HDAC1, HDAC2 and SIN3B. Interacts with nuclear receptors AR, NR1D1, NR3C1/GR, RORA and RORC; the interaction with at least NR3C1/GR is ligand dependent. Interacts with PRKDC. Interacts with the G protein subunit alpha GNAS; the interaction may block GPCR-mediated regulation of cAMP concentrations. Interacts with PRMT5. Interacts with EZH2. Interacts with MYBBP1A, DOCK7, HNRNPU, RPL7A, RPL8 and RPS3. Interacts with MAP1LC3B. Interacts with CLOCK. Interacts with BMAL1. Interacts weakly with HDAC3; this interaction is enhanced in the presence of FBXL3. Interacts with TRIM28, KCTD5 and DDB1. Interacts with DTL. Interacts with DDB1-CUL4A complex. Interacts with FOXO1. Interacts with PSMD2 in a KDM8-dependent manner. Interacts with KDM8 in a FBXL3-dependent manner. Interacts with PPARA. Interacts with PPARG in a ligand-dependent manner. Interacts with PPARD (via domain NR LBD) in a ligand-dependent manner. Interacts with NR1I2 (via domain NR LBD) in a ligand-dependent manner. Interacts with NR1I3, VDR and HNF4A. The cofactor is FAD. (6R)-5,10-methylene-5,6,7,8-tetrahydrofolate is required as a cofactor. Phosphorylation on Ser-247 by MAPK is important for the inhibition of CLOCK-BMAL1-mediated transcriptional activity. Phosphorylation by CSNK1E requires interaction with PER1 or PER2. Phosphorylation at Ser-71 and Ser-280 by AMPK decreases protein stability. Phosphorylation at Ser-588 exhibits a robust circadian rhythm with a peak at CT8, increases protein stability, prevents SCF(FBXL3)-mediated degradation and is antagonized by interaction with PRKDC. In terms of processing, ubiquitinated by the SCF(FBXL3) and SCF(FBXL21) complexes, regulating the balance between degradation and stabilization. The SCF(FBXL3) complex is mainly nuclear and mediates ubiquitination and subsequent degradation of CRY1. In contrast, cytoplasmic SCF(FBXL21) complex-mediated ubiquitination leads to stabilize CRY1 and counteract the activity of the SCF(FBXL3) complex. The SCF(FBXL3) and SCF(FBXL21) complexes probably mediate ubiquitination at different Lys residues. Ubiquitination at Lys-11 and Lys-107 are specifically ubiquitinated by the SCF(FBXL21) complex but not by the SCF(FBXL3) complex. Ubiquitination may be inhibited by PER2. Deubiquitinated by USP7. Post-translationally, undergoes autophagy-mediated degradation in the liver in a time-dependent manner. Autophagic degradation of CRY1 (an inhibitor of gluconeogenesis) occurs during periods of reduced feeding allowing induction of gluconeogenesis and maintenance of blood glucose levels. In terms of tissue distribution, expressed in cones, amacrine cells, and retinal ganglion cells of the retina (at protein level). Expressed in all tissues examined including heart, brain, spleen, lung, liver, skeletal muscle, kidney and testis. Higher levels in brain, liver and testis. In the retina, highly expressed in the ganglion cell layer (GCL) and in the inner nuclear layer (INL). Evenly distributed in central and peripheral retina. In the brain, highly expressed in the suprachiasmatic nucleus (SCN). High levels in cerebral cortical layers particularly in the pyramidial cell layer of the hippocampus, the granular cell layer of the dentate gyrus (DG) and the pyramidal cell layer of the piriform cortex (PFC).

It localises to the cytoplasm. Its subcellular location is the nucleus. With respect to regulation, KL001 (N-[3-(9H-carbazol-9-yl)-2-hydroxypropyl]-N-(2-furanylmethyl)-methanesulfonamide) binds to CRY1 and stabilizes it by inhibiting FBXL3- and ubiquitin-dependent degradation of CRY1 resulting in lengthening of the circadian periods. KL001-mediated CRY1 stabilization can inhibit glucagon-induced gluconeogenesis in primary hepatocytes. In terms of biological role, transcriptional repressor which forms a core component of the circadian clock. The circadian clock, an internal time-keeping system, regulates various physiological processes through the generation of approximately 24 hour circadian rhythms in gene expression, which are translated into rhythms in metabolism and behavior. It is derived from the Latin roots 'circa' (about) and 'diem' (day) and acts as an important regulator of a wide array of physiological functions including metabolism, sleep, body temperature, blood pressure, endocrine, immune, cardiovascular, and renal function. Consists of two major components: the central clock, residing in the suprachiasmatic nucleus (SCN) of the brain, and the peripheral clocks that are present in nearly every tissue and organ system. Both the central and peripheral clocks can be reset by environmental cues, also known as Zeitgebers (German for 'timegivers'). The predominant Zeitgeber for the central clock is light, which is sensed by retina and signals directly to the SCN. The central clock entrains the peripheral clocks through neuronal and hormonal signals, body temperature and feeding-related cues, aligning all clocks with the external light/dark cycle. Circadian rhythms allow an organism to achieve temporal homeostasis with its environment at the molecular level by regulating gene expression to create a peak of protein expression once every 24 hours to control when a particular physiological process is most active with respect to the solar day. Transcription and translation of core clock components (CLOCK, NPAS2, BMAL1, BMAL2, PER1, PER2, PER3, CRY1 and CRY2) plays a critical role in rhythm generation, whereas delays imposed by post-translational modifications (PTMs) are important for determining the period (tau) of the rhythms (tau refers to the period of a rhythm and is the length, in time, of one complete cycle). A diurnal rhythm is synchronized with the day/night cycle, while the ultradian and infradian rhythms have a period shorter and longer than 24 hours, respectively. Disruptions in the circadian rhythms contribute to the pathology of cardiovascular diseases, cancer, metabolic syndromes and aging. A transcription/translation feedback loop (TTFL) forms the core of the molecular circadian clock mechanism. Transcription factors, CLOCK or NPAS2 and BMAL1 or BMAL2, form the positive limb of the feedback loop, act in the form of a heterodimer and activate the transcription of core clock genes and clock-controlled genes (involved in key metabolic processes), harboring E-box elements (5'-CACGTG-3') within their promoters. The core clock genes: PER1/2/3 and CRY1/2 which are transcriptional repressors form the negative limb of the feedback loop and interact with the CLOCK|NPAS2-BMAL1|BMAL2 heterodimer inhibiting its activity and thereby negatively regulating their own expression. This heterodimer also activates nuclear receptors NR1D1/2 and RORA/B/G, which form a second feedback loop and which activate and repress BMAL1 transcription, respectively. CRY1 and CRY2 have redundant functions but also differential and selective contributions at least in defining the pace of the SCN circadian clock and its circadian transcriptional outputs. More potent transcriptional repressor in cerebellum and liver than CRY2, though more effective in lengthening the period of the SCN oscillator. On its side, CRY2 seems to play a critical role in tuning SCN circadian period by opposing the action of CRY1. With CRY2, is dispensable for circadian rhythm generation but necessary for the development of intercellular networks for rhythm synchrony. Capable of translocating circadian clock core proteins such as PER proteins to the nucleus. Interacts with CLOCK-BMAL1 independently of PER proteins and is found at CLOCK-BMAL1-bound sites, suggesting that CRY may act as a molecular gatekeeper to maintain CLOCK-BMAL1 in a poised and repressed state until the proper time for transcriptional activation. Represses the CLOCK-BMAL1 induced transcription of BHLHE40/DEC1, ATF4, MTA1, KLF10 and NAMPT. May repress circadian target genes expression in collaboration with HDAC1 and HDAC2 through histone deacetylation. Mediates the clock-control activation of ATR and modulates ATR-mediated DNA damage checkpoint. In liver, mediates circadian regulation of cAMP signaling and gluconeogenesis by binding to membrane-coupled G proteins and blocking glucagon-mediated increases in intracellular cAMP concentrations and CREB1 phosphorylation. Inhibits hepatic gluconeogenesis by decreasing nuclear FOXO1 levels that down-regulates gluconeogenic gene expression. Besides its role in the maintenance of the circadian clock, is also involved in the regulation of other processes. Represses glucocorticoid receptor NR3C1/GR-induced transcriptional activity by binding to glucocorticoid response elements (GREs). Plays a key role in glucose and lipid metabolism modulation, in part, through the transcriptional regulation of genes involved in these pathways, such as LEP or ACSL4. Represses PPARD and its target genes in the skeletal muscle and limits exercise capacity. Plays an essential role in the generation of circadian rhythms in the retina. Represses the transcriptional activity of NR1I2. The sequence is that of Cryptochrome-1 (Cry1) from Mus musculus (Mouse).